The chain runs to 520 residues: CUGBP Elav-like family member 4 (520 aa).

3 RRM domains span residues 47–128 (IKLF…PADS), 135–215 (RKLF…FADT), and 435–513 (CNLF…LKRP).

Belongs to the CELF/BRUNOL family.

Its subcellular location is the nucleus. The protein resides in the cytoplasm. In terms of biological role, RNA-binding protein that may be implicated in the regulation of pre-mRNA alternative splicing. The polypeptide is CUGBP Elav-like family member 4 (celf4) (Danio rerio (Zebrafish)).